Consider the following 521-residue polypeptide: Glucose-6-phosphate isomerase (521 aa).

The active-site Proton donor is the glutamate 327. Catalysis depends on residues histidine 358 and lysine 486.

This sequence belongs to the GPI family.

The protein localises to the cytoplasm. The catalysed reaction is alpha-D-glucose 6-phosphate = beta-D-fructose 6-phosphate. The protein operates within carbohydrate biosynthesis; gluconeogenesis. It participates in carbohydrate degradation; glycolysis; D-glyceraldehyde 3-phosphate and glycerone phosphate from D-glucose: step 2/4. In terms of biological role, catalyzes the reversible isomerization of glucose-6-phosphate to fructose-6-phosphate. The chain is Glucose-6-phosphate isomerase from Bordetella bronchiseptica (strain ATCC BAA-588 / NCTC 13252 / RB50) (Alcaligenes bronchisepticus).